The chain runs to 320 residues: MRQTKTGILLANLGTPDAPTPEAVKRYLKQFLSDRRVVDTSRLLWWPLLRGVILPLRSPRVAKLYASVWMEDGSPLMVYSRQQQQALAQRLPDTPVALGMSYGSPSLESAVDELLAEHVDHIVVLPLYPQFSCSTVGAVWDELARILARKRSIPGISFIRDYADNHDYINALANSVRASFAKHGESDLLLLSYHGIPQRYADEGDDYPQRCRTTTRELASALGMAPEKVMMTFQSRFGREPWLMPYTDETLKMLGEKGVGHIQVMCPGFAADCLETLEEIAEQNREVFLGAGGKKYEYIPALNATPEHIEMMANLVAAYR.

Positions 194 and 275 each coordinate Fe cation.

Belongs to the ferrochelatase family. As to quaternary structure, monomer.

It localises to the cytoplasm. It catalyses the reaction heme b + 2 H(+) = protoporphyrin IX + Fe(2+). The protein operates within porphyrin-containing compound metabolism; protoheme biosynthesis; protoheme from protoporphyrin-IX: step 1/1. Its function is as follows. Catalyzes the ferrous insertion into protoporphyrin IX. This is Ferrochelatase from Escherichia coli O139:H28 (strain E24377A / ETEC).